The chain runs to 490 residues: Ribulose bisphosphate carboxylase large chain (490 aa).

Substrate contacts are provided by Asn-127 and Thr-177. Residue Lys-179 is the Proton acceptor of the active site. Position 181 (Lys-181) interacts with substrate. 3 residues coordinate Mg(2+): Lys-205, Asp-207, and Glu-208. Lys-205 carries the post-translational modification N6-carboxylysine. The active-site Proton acceptor is His-297. Arg-298, His-330, and Ser-382 together coordinate substrate.

Belongs to the RuBisCO large chain family. Type I subfamily. In terms of assembly, heterohexadecamer of 8 large chains and 8 small chains. Requires Mg(2+) as cofactor.

The protein resides in the plastid. The protein localises to the chloroplast. It catalyses the reaction 2 (2R)-3-phosphoglycerate + 2 H(+) = D-ribulose 1,5-bisphosphate + CO2 + H2O. The catalysed reaction is D-ribulose 1,5-bisphosphate + O2 = 2-phosphoglycolate + (2R)-3-phosphoglycerate + 2 H(+). In terms of biological role, ruBisCO catalyzes two reactions: the carboxylation of D-ribulose 1,5-bisphosphate, the primary event in carbon dioxide fixation, as well as the oxidative fragmentation of the pentose substrate in the photorespiration process. Both reactions occur simultaneously and in competition at the same active site. The polypeptide is Ribulose bisphosphate carboxylase large chain (Thalassiosira pseudonana (Marine diatom)).